Reading from the N-terminus, the 165-residue chain is Protein SprT (165 aa).

The SprT-like domain maps to E20 to V163. H78 lines the Zn(2+) pocket. E79 is an active-site residue. H82 provides a ligand contact to Zn(2+).

The protein belongs to the SprT family. It depends on Zn(2+) as a cofactor.

It localises to the cytoplasm. This is Protein SprT from Shigella boydii serotype 18 (strain CDC 3083-94 / BS512).